Here is a 24-residue protein sequence, read N- to C-terminus: U1-poneritoxin-Ni2a (24 aa).

This sequence belongs to the ponericin-L family. As to expression, expressed by the venom gland.

It localises to the secreted. Its function is as follows. Has a broad spectrum of activity against both Gram-positive and Gram-negative bacteria. Is inactive against yeast, erythrocytes, and insects. This Neoponera inversa (Ant) protein is U1-poneritoxin-Ni2a.